The chain runs to 269 residues: Surfeit locus protein 4 (269 aa).

5 helical membrane-spanning segments follow: residues 64–84 (LLAS…CVLV), 92–112 (YACF…SILW), 179–199 (FFSI…AIGF), 203–223 (LAAL…NAFW), and 239–259 (FFQT…GPGG). The short motif at 266–269 (KKEW) is the Di-lysine motif element.

Belongs to the SURF4 family. As to quaternary structure, found in a complex composed at least of SURF4, TMED2 and TMED10. May interact with LMAN1. Interacts with ZFYVE27 and with KIF5A in a ZFYVE27-dependent manner. Interacts with STING1. Interacts with SAR1B. Interacts with TMEM41B.

It is found in the endoplasmic reticulum membrane. The protein localises to the endoplasmic reticulum-Golgi intermediate compartment membrane. It localises to the golgi apparatus membrane. In terms of biological role, endoplasmic reticulum cargo receptor that mediates the export of lipoproteins by recruiting cargos into COPII vesicles to facilitate their secretion. Acts as a cargo receptor for lipoproteins bearing both APOB and APOA1, thereby regulating lipoprotein delivery and the maintenance of lipid homeostasis. Synergizes with the GTPase SAR1B to mediate transport of circulating lipoproteins. Promotes the secretion of PCSK9. Also mediates the efficient secretion of erythropoietin (EPO). May also play a role in the maintenance of the architecture of the endoplasmic reticulum-Golgi intermediate compartment and of the Golgi. This is Surfeit locus protein 4 from Homo sapiens (Human).